The following is a 193-amino-acid chain: Orotate phosphoribosyltransferase (193 aa).

5-phospho-alpha-D-ribose 1-diphosphate is bound by residues arginine 85, lysine 89, and aspartate 111–serine 119. Residues threonine 115 and arginine 143 each coordinate orotate.

Belongs to the purine/pyrimidine phosphoribosyltransferase family. PyrE subfamily. As to quaternary structure, homodimer. Mg(2+) is required as a cofactor.

The catalysed reaction is orotidine 5'-phosphate + diphosphate = orotate + 5-phospho-alpha-D-ribose 1-diphosphate. The protein operates within pyrimidine metabolism; UMP biosynthesis via de novo pathway; UMP from orotate: step 1/2. Functionally, catalyzes the transfer of a ribosyl phosphate group from 5-phosphoribose 1-diphosphate to orotate, leading to the formation of orotidine monophosphate (OMP). The protein is Orotate phosphoribosyltransferase of Pyrobaculum aerophilum (strain ATCC 51768 / DSM 7523 / JCM 9630 / CIP 104966 / NBRC 100827 / IM2).